The sequence spans 2133 residues: Coagulation factor VIII (2133 aa).

Positions 1-19 (MQLELSTCVFLCLLPLGFS) are cleaved as a signal peptide. Plastocyanin-like domains follow at residues 20–199 (AIRR…LLVC), 207–357 (ERTQ…QLRR), 399–573 (KTWV…LLIC), and 583–730 (NQMM…VYSC). 2 consecutive F5/8 type A domains span residues 20–357 (AIRR…QLRR) and 399–730 (KTWV…VYSC). A disulfide bridge connects residues Cys-173 and Cys-199. N-linked (GlcNAc...) asparagine glycans are attached at residues Asn-233 and Asn-259. Residues Cys-547 and Cys-573 are joined by a disulfide bond. N-linked (GlcNAc...) asparagine glycosylation is present at Asn-601. Tyr-737, Tyr-738, and Tyr-742 each carry sulfotyrosine. Disordered stretches follow at residues 760–790 (SFAQNSRPPSASQKQFQTITSPEDDVELDPQ) and 804–914 (PSGD…PHPQ). The segment at 760-1599 (SFAQNSRPPS…LISYPDDQEQ (840 aa)) is b. Residues 761-780 (FAQNSRPPSASQKQFQTITS) show a composition bias toward polar residues. Basic and acidic residues-rich tracts occupy residues 853 to 862 (LRPELHHSAE) and 868 to 878 (EPEKELKKLDS). Low complexity predominate over residues 879-888 (KMSSSSDLLK). Positions 889–900 (TSPTIPSDTLSA) are enriched in polar residues. N-linked (GlcNAc...) asparagine glycans are attached at residues Asn-929, Asn-985, and Asn-1025. Residues 1042 to 1078 (LGKNPLSSERGPSPELLTSSGSGKSVKGQSSGQGRIR) are disordered. A compositionally biased stretch (low complexity) spans 1060–1075 (SSGSGKSVKGQSSGQG). N-linked (GlcNAc...) asparagine glycosylation is present at Asn-1111. The disordered stretch occupies residues 1160–1179 (PSVEGFDGGSHAPVPQDSRS). 5 N-linked (GlcNAc...) asparagine glycosylation sites follow: Asn-1181, Asn-1208, Asn-1245, Asn-1265, and Asn-1335. Residues 1200–1221 (EAPLEAPGNRTGPGPRSAVPRR) form a disordered region. Disordered regions lie at residues 1358–1391 (LNKVNRPGRTPSKLLGPPMPKEWESLEKSPKSTA) and 1406–1441 (ESNHSIAAKNEGQAETQREAAWTKQGGPGRLCAPKP). Positions 1378 to 1387 (KEWESLEKSP) are enriched in basic and acidic residues. N-linked (GlcNAc...) asparagine glycosylation is found at Asn-1408 and Asn-1611. Plastocyanin-like domains are found at residues 1495-1659 (RTRH…LLIC) and 1669-1822 (GRQV…SKEC). The F5/8 type A 3 domain maps to 1495–1822 (RTRHYFIAAV…TTFLVYSKEC (328 aa)). 3 disulfide bridges follow: Cys-1633-Cys-1659, Cys-1822-Cys-1970, and Cys-1975-Cys-2127. F5/8 type C domains follow at residues 1822–1970 (CQAP…LMGC) and 1975–2127 (CSMP…VLGC). N-linked (GlcNAc...) asparagine glycosylation occurs at Asn-1919.

The protein belongs to the multicopper oxidase family. As to quaternary structure, interacts with vWF. vWF binding is essential for the stabilization of F8 in circulation. Proteolytically cleaved by cathepsin CTSG to produce a partially activated form.

Its subcellular location is the secreted. The protein localises to the extracellular space. Factor VIII, along with calcium and phospholipid, acts as a cofactor for factor IXa when it converts factor X to the activated form, factor Xa. The chain is Coagulation factor VIII (F8) from Sus scrofa (Pig).